A 74-amino-acid polypeptide reads, in one-letter code: UPF0352 protein MS1910 (74 aa).

It belongs to the UPF0352 family.

The chain is UPF0352 protein MS1910 from Mannheimia succiniciproducens (strain KCTC 0769BP / MBEL55E).